Consider the following 443-residue polypeptide: Protoheme IX farnesyltransferase, mitochondrial (443 aa).

The next 7 helical transmembrane spans lie at 174–194 (AAGF…LTSV), 235–255 (LAVS…TLGV), 257–277 (PLTG…YTPL), 280–300 (ISIA…VMGW), 309–329 (AGAF…FNAL), 364–384 (LLVL…FPIM), and 411–431 (LFFC…TCKR).

This sequence belongs to the UbiA prenyltransferase family.

The protein localises to the mitochondrion membrane. The catalysed reaction is heme b + (2E,6E)-farnesyl diphosphate + H2O = Fe(II)-heme o + diphosphate. In terms of biological role, converts protoheme IX and farnesyl diphosphate to heme O. The protein is Protoheme IX farnesyltransferase, mitochondrial (COX10) of Pongo abelii (Sumatran orangutan).